A 327-amino-acid chain; its full sequence is Sugar transporter ERD6-like 9 (327 aa).

A run of 8 helical transmembrane segments spans residues 26 to 46, 68 to 88, 102 to 122, 125 to 145, 152 to 172, 180 to 200, 260 to 280, and 295 to 315; these read FLVF…VALG, VFGS…ATIA, VFCI…WLDL, FFVG…IAEI, GTFT…AYYL, IIAL…FFVP, LTIG…GLGY, and IGMT…LILV.

The protein belongs to the major facilitator superfamily. Sugar transporter (TC 2.A.1.1) family.

It is found in the membrane. Functionally, sugar transporter. This Arabidopsis thaliana (Mouse-ear cress) protein is Sugar transporter ERD6-like 9.